Reading from the N-terminus, the 418-residue chain is Endoglucanase EG-II (418 aa).

Residues 1 to 21 (MNKSVAPLLLAASILYGGAAA) form the signal peptide. Position 22 is a pyrrolidone carboxylic acid (Q22). The region spanning 22–57 (QQTVWGQCGGIGWSGPTNCAPGSACSTLNPYYAQCI) is the CBM1 domain. The segment at 58-91 (PGATTITTSTRPPSGPTTTTRATSTSSSTPPTSS) is linker. Residues 63–91 (ITTSTRPPSGPTTTTRATSTSSSTPPTSS) form a disordered region. A catalytic region spans residues 92-418 (GVRFAGVNIA…SLVSSCLARK (327 aa)). C107 and C113 form a disulfide bridge. The N-linked (GlcNAc) asparagine glycan is linked to N124. C183 and C190 form a disulfide bridge. E239 acts as the Proton donor/acceptor in catalysis. Cystine bridges form between C323–C359 and C364–C414. E350 serves as the catalytic Nucleophile.

The protein belongs to the glycosyl hydrolase 5 (cellulase A) family.

The protein localises to the secreted. The enzyme catalyses Endohydrolysis of (1-&gt;4)-beta-D-glucosidic linkages in cellulose, lichenin and cereal beta-D-glucans.. Functionally, endoglucanase (EG) that cleaves the internal beta-1,4-glucosidic bonds in cellulose. The degradation of cellulose involves an interplay between different cellulolytic enzymes. Hydrolysis starts with EGs, which cut internal glycosidic linkages to reduce the polymerization degree of the substrate and creates new chain ends for exocellobiohydrolases (CBHs). The CBH release the disaccharide cellobiose from the non-reducing end of the cellulose polymer chain. Finally, beta-1,4-glucosidases hydrolyze the cellobiose and other short cello-oligosaccharides into glucose units. In Hypocrea jecorina (strain ATCC 56765 / BCRC 32924 / NRRL 11460 / Rut C-30) (Trichoderma reesei), this protein is Endoglucanase EG-II (egl2).